A 309-amino-acid polypeptide reads, in one-letter code: Homoserine kinase (309 aa).

Residue 91 to 101 (PIGSGLGSSAC) participates in ATP binding.

This sequence belongs to the GHMP kinase family. Homoserine kinase subfamily.

It is found in the cytoplasm. The enzyme catalyses L-homoserine + ATP = O-phospho-L-homoserine + ADP + H(+). Its pathway is amino-acid biosynthesis; L-threonine biosynthesis; L-threonine from L-aspartate: step 4/5. In terms of biological role, catalyzes the ATP-dependent phosphorylation of L-homoserine to L-homoserine phosphate. This Serratia marcescens protein is Homoserine kinase (thrB).